The primary structure comprises 157 residues: Ribosome maturation factor RimP (157 aa).

This sequence belongs to the RimP family.

Its subcellular location is the cytoplasm. In terms of biological role, required for maturation of 30S ribosomal subunits. This is Ribosome maturation factor RimP from Enterococcus faecalis (strain ATCC 700802 / V583).